We begin with the raw amino-acid sequence, 194 residues long: uncharacterized protein (194 aa).

An N-terminal signal peptide occupies residues 1–15 (MFVLSIALLSCTTLC). The 86-residue stretch at 49–134 (CPQGLHADAI…KATYYEKIRC (86 aa)) folds into the PAN domain. Cystine bridges form between cysteine 49–cysteine 134 and cysteine 79–cysteine 106.

This is an uncharacterized protein from Caenorhabditis elegans.